A 325-amino-acid polypeptide reads, in one-letter code: Tetraacyldisaccharide 4'-kinase (325 aa).

Residue 55 to 62 (TAGGNGKT) coordinates ATP.

This sequence belongs to the LpxK family.

It carries out the reaction a lipid A disaccharide + ATP = a lipid IVA + ADP + H(+). The protein operates within glycolipid biosynthesis; lipid IV(A) biosynthesis; lipid IV(A) from (3R)-3-hydroxytetradecanoyl-[acyl-carrier-protein] and UDP-N-acetyl-alpha-D-glucosamine: step 6/6. Functionally, transfers the gamma-phosphate of ATP to the 4'-position of a tetraacyldisaccharide 1-phosphate intermediate (termed DS-1-P) to form tetraacyldisaccharide 1,4'-bis-phosphate (lipid IVA). The chain is Tetraacyldisaccharide 4'-kinase from Salmonella enteritidis PT4 (strain P125109).